A 287-amino-acid chain; its full sequence is AA9 family lytic polysaccharide monooxygenase D (287 aa).

The signal sequence occupies residues 1–17 (MKLSLLAAAAIAPMVSA). Residue His18 coordinates Cu(2+). The cysteines at positions 67 and 189 are disulfide-linked. Residue His176 participates in O2 binding. Tyr186 serves as a coordination point for Cu(2+). 2 N-linked (GlcNAc...) asparagine glycosylation sites follow: Asn220 and Asn250. The interval 239–287 (TGGSGSSTGSYNESNAEDSNEYPYQKESGTCQSNFYRREHARDFSHRRA) is disordered. Over residues 274 to 287 (YRREHARDFSHRRA) the composition is skewed to basic and acidic residues.

Belongs to the polysaccharide monooxygenase AA9 family. The cofactor is Cu(2+).

It is found in the secreted. The catalysed reaction is [(1-&gt;4)-beta-D-glucosyl]n+m + reduced acceptor + O2 = 4-dehydro-beta-D-glucosyl-[(1-&gt;4)-beta-D-glucosyl]n-1 + [(1-&gt;4)-beta-D-glucosyl]m + acceptor + H2O.. Its function is as follows. Lytic polysaccharide monooxygenase (LPMO) that depolymerizes crystalline and amorphous polysaccharides via the oxidation of scissile alpha- or beta-(1-4)-glycosidic bonds, yielding C1 oxidation products. Catalysis by LPMOs requires the reduction of the active-site copper from Cu(II) to Cu(I) by a reducing agent and H(2)O(2) or O(2) as a cosubstrate. Active on celluloseas as well as on the hemicellulose xyloglucan. Shows synergy with other hydrolases in degrading sorghum stover. This Emericella nidulans (strain FGSC A4 / ATCC 38163 / CBS 112.46 / NRRL 194 / M139) (Aspergillus nidulans) protein is AA9 family lytic polysaccharide monooxygenase D.